Consider the following 500-residue polypeptide: ACT domain-containing protein ACR2 (500 aa).

4 consecutive ACT domains span residues 39–121, 136–213, 298–373, and 376–459; these read VVKV…EANN, AIEM…ADPA, IVTV…RVCE, and KLEL…TVGS. Positions 450–478 are disordered; the sequence is EDTKIDTVGSDEPTASASATPQRQPQPHR. The segment covering 462–474 has biased composition (polar residues); sequence PTASASATPQRQP.

Its function is as follows. May bind amino acids. This Arabidopsis thaliana (Mouse-ear cress) protein is ACT domain-containing protein ACR2.